The primary structure comprises 432 residues: Adenylosuccinate synthetase (432 aa).

GTP is bound by residues 13 to 19 (GDEGKGK) and 41 to 43 (GHT). Asp14 functions as the Proton acceptor in the catalytic mechanism. Asp14 and Gly41 together coordinate Mg(2+). IMP-binding positions include 14-17 (DEGK), 39-42 (NAGH), Thr130, Arg144, Gln225, Thr240, and Arg304. Residue His42 is the Proton donor of the active site. 300–306 (ATTGRSR) contributes to the substrate binding site. GTP is bound by residues Arg306, 332-334 (KLD), and 415-417 (STG).

This sequence belongs to the adenylosuccinate synthetase family. In terms of assembly, homodimer. Mg(2+) is required as a cofactor.

Its subcellular location is the cytoplasm. The enzyme catalyses IMP + L-aspartate + GTP = N(6)-(1,2-dicarboxyethyl)-AMP + GDP + phosphate + 2 H(+). Its pathway is purine metabolism; AMP biosynthesis via de novo pathway; AMP from IMP: step 1/2. In terms of biological role, plays an important role in the de novo pathway of purine nucleotide biosynthesis. Catalyzes the first committed step in the biosynthesis of AMP from IMP. This is Adenylosuccinate synthetase from Yersinia pseudotuberculosis serotype O:1b (strain IP 31758).